The following is a 173-amino-acid chain: Disulfide bond formation protein B (173 aa).

Residues 1 to 16 (MRILSSLKTFSQSRLS) are Cytoplasmic-facing. A helical transmembrane segment spans residues 17–33 (WLLLLAFVVFFTLCAMY). Residues 34-51 (FQHVMLLAPCVMCIYERI) are Periplasmic-facing. Cysteines 43 and 46 form a disulfide. The chain crosses the membrane as a helical span at residues 52 to 67 (AMLGIGVAALIGAIAP). Over 68–74 (QNPVVRW) the chain is Cytoplasmic. A helical transmembrane segment spans residues 75–92 (LGFAAWGASSYKGLMLAI). Residues 93–147 (EHVNYQFNPSPFATCDLFVTFPAWAPLNQWAPNLFEAYGDCSKVVWQFLTLSMPQ) lie on the Periplasmic side of the membrane. A disulfide bridge links C107 with C133. Residues 148–166 (WLVVIFAANLLALAIFVVA) traverse the membrane as a helical segment. At 167–173 (QLAKTSR) the chain is on the cytoplasmic side.

The protein belongs to the DsbB family.

The protein localises to the cell inner membrane. Required for disulfide bond formation in some periplasmic proteins. Acts by oxidizing the DsbA protein. The polypeptide is Disulfide bond formation protein B (Vibrio cholerae serotype O1 (strain ATCC 39315 / El Tor Inaba N16961)).